The following is a 357-amino-acid chain: Protein NDRG2 (357 aa).

The span at 1–14 (MAELREVQITEEKP) shows a compositional bias: basic and acidic residues. The tract at residues 1–26 (MAELREVQITEEKPLLPGQTPEVAKT) is disordered. Position 2 is an N-acetylalanine (alanine 2). Phosphothreonine is present on threonine 20. Serine 312 and serine 314 each carry phosphoserine. Residue threonine 316 is modified to Phosphothreonine. At serine 318 the chain carries Phosphoserine. Threonine 320 carries the post-translational modification Phosphothreonine. The disordered stretch occupies residues 320-357 (TSAASIDGNRSRSRTLSQSSESGTLSSGPPGHTMEVSC). Residues serine 321, serine 324, and serine 330 each carry the phosphoserine modification. The segment covering 333 to 347 (RTLSQSSESGTLSSG) has biased composition (low complexity). Threonine 334 carries the phosphothreonine modification. Phosphoserine is present on residues serine 336, serine 338, serine 339, and serine 341. Threonine 343 is subject to Phosphothreonine. Position 356 is a phosphoserine (serine 356).

It belongs to the NDRG family. As to quaternary structure, interacts with CTNNB1.

Its subcellular location is the cytoplasm. The protein localises to the perinuclear region. It localises to the cell projection. The protein resides in the growth cone. In terms of biological role, contributes to the regulation of the Wnt signaling pathway. Down-regulates CTNNB1-mediated transcriptional activation of target genes, such as CCND1, and may thereby act as tumor suppressor. May be involved in dendritic cell and neuron differentiation. This is Protein NDRG2 (NDRG2) from Bos taurus (Bovine).